A 196-amino-acid chain; its full sequence is uncharacterized protein (196 aa).

It to H.influenzae HI_0431.

This is an uncharacterized protein from Salmonella typhi.